Consider the following 85-residue polypeptide: Large ribosomal subunit protein bL27 (85 aa).

The segment at 1–21 (MAHKKAGGSTRNGRDSRGKRL) is disordered.

This sequence belongs to the bacterial ribosomal protein bL27 family.

The sequence is that of Large ribosomal subunit protein bL27 from Blochmanniella floridana.